A 290-amino-acid polypeptide reads, in one-letter code: ATP synthase gamma chain (290 aa).

This sequence belongs to the ATPase gamma chain family. In terms of assembly, F-type ATPases have 2 components, CF(1) - the catalytic core - and CF(0) - the membrane proton channel. CF(1) has five subunits: alpha(3), beta(3), gamma(1), delta(1), epsilon(1). CF(0) has three main subunits: a, b and c.

It is found in the cell membrane. Functionally, produces ATP from ADP in the presence of a proton gradient across the membrane. The gamma chain is believed to be important in regulating ATPase activity and the flow of protons through the CF(0) complex. This Roseiflexus castenholzii (strain DSM 13941 / HLO8) protein is ATP synthase gamma chain.